The following is a 311-amino-acid chain: LOB domain-containing protein 10 (311 aa).

An LOB domain is found at 4-105 (TPCAACKLLR…QDLLTAKEEL (102 aa)). Low complexity predominate over residues 264–277 (LQEGQEQTEEGQFL). The segment at 264–311 (LQEGQEQTEEGQFLMQPMGQENLHDEEEEEELEPPVKWRMSENKEASF) is disordered. The segment covering 287-296 (HDEEEEEELE) has biased composition (acidic residues). Positions 297 to 311 (PPVKWRMSENKEASF) are enriched in basic and acidic residues.

The protein belongs to the LOB domain-containing protein family.

This Arabidopsis thaliana (Mouse-ear cress) protein is LOB domain-containing protein 10 (LBD10).